The primary structure comprises 826 residues: Copper-transporting ATPase 1 (826 aa).

HMA domains follow at residues 15 to 80 and 82 to 147; these read APTD…YEPK and IIQE…YDVR. Cu cation contacts are provided by Cys-26, Cys-29, Cys-93, and Cys-96. Transmembrane regions (helical) follow at residues 172–192, 209–229, 246–266, 270–290, 429–449, and 457–477; these read LVIL…GSHF, NLYI…LRFF, LVVL…FASG, SGTA…ILLG, AWFV…WYVF, and FALV…MGLA. The active-site 4-aspartylphosphate intermediate is the Asp-514. Asp-713 and Asp-717 together coordinate Mg(2+). The next 2 membrane-spanning stretches (helical) occupy residues 772–792 and 795–815; these read FWAF…LYPL and TLLS…FVLG.

This sequence belongs to the cation transport ATPase (P-type) (TC 3.A.3) family. Type IB subfamily.

The protein resides in the cell membrane. It catalyses the reaction Cu(2+)(in) + ATP + H2O = Cu(2+)(out) + ADP + phosphate + H(+). In terms of biological role, involved in copper transport. This Rhizobium meliloti (strain 1021) (Ensifer meliloti) protein is Copper-transporting ATPase 1 (actP1).